Reading from the N-terminus, the 460-residue chain is Chromosomal replication initiator protein DnaA (460 aa).

Residues 1 to 84 form a domain I, interacts with DnaA modulators region; sequence MAVSLWQQCI…RFDIGSRPSA (84 aa). The domain II stretch occupies residues 84–123; it reads AKKPEPAPVAAVRVPSPQTKASVGTAFNTTEPVANTNHRS. A domain III, AAA+ region region spans residues 124–340; that stretch reads NINPTYQFDN…GALNRVIANA (217 aa). Residues glycine 168, glycine 170, lysine 171, and threonine 172 each contribute to the ATP site. Residues 341-460 form a domain IV, binds dsDNA region; sequence NFTGRPITID…YANLIRTLSS (120 aa).

It belongs to the DnaA family. As to quaternary structure, oligomerizes as a right-handed, spiral filament on DNA at oriC.

It is found in the cytoplasm. Plays an essential role in the initiation and regulation of chromosomal replication. ATP-DnaA binds to the origin of replication (oriC) to initiate formation of the DNA replication initiation complex once per cell cycle. Binds the DnaA box (a 9 base pair repeat at the origin) and separates the double-stranded (ds)DNA. Forms a right-handed helical filament on oriC DNA; dsDNA binds to the exterior of the filament while single-stranded (ss)DNA is stabiized in the filament's interior. The ATP-DnaA-oriC complex binds and stabilizes one strand of the AT-rich DNA unwinding element (DUE), permitting loading of DNA polymerase. After initiation quickly degrades to an ADP-DnaA complex that is not apt for DNA replication. Binds acidic phospholipids. The sequence is that of Chromosomal replication initiator protein DnaA from Shewanella oneidensis (strain ATCC 700550 / JCM 31522 / CIP 106686 / LMG 19005 / NCIMB 14063 / MR-1).